The chain runs to 468 residues: 3-isopropylmalate dehydratase large subunit (468 aa).

[4Fe-4S] cluster is bound by residues C349, C409, and C412.

This sequence belongs to the aconitase/IPM isomerase family. LeuC type 1 subfamily. In terms of assembly, heterodimer of LeuC and LeuD. [4Fe-4S] cluster is required as a cofactor.

It carries out the reaction (2R,3S)-3-isopropylmalate = (2S)-2-isopropylmalate. Its pathway is amino-acid biosynthesis; L-leucine biosynthesis; L-leucine from 3-methyl-2-oxobutanoate: step 2/4. In terms of biological role, catalyzes the isomerization between 2-isopropylmalate and 3-isopropylmalate, via the formation of 2-isopropylmaleate. The chain is 3-isopropylmalate dehydratase large subunit from Jannaschia sp. (strain CCS1).